The primary structure comprises 530 residues: Synembryn-like chaperone C3E7.04c (530 aa).

The helical transmembrane segment at Ser492–Phe512 threads the bilayer.

This sequence belongs to the synembryn family.

It localises to the membrane. Chaperone that specifically binds and folds some, but not all, nascent G alpha proteins prior to G protein heterotrimer formation, promoting their stability and activity. Also acts as a guanine nucleotide exchange factor (GEF) for G alpha proteins by stimulating exchange of bound GDP for free GTP. The polypeptide is Synembryn-like chaperone C3E7.04c (Schizosaccharomyces pombe (strain 972 / ATCC 24843) (Fission yeast)).